Here is a 415-residue protein sequence, read N- to C-terminus: Tyrosine--tRNA ligase (415 aa).

Residues 54 to 63 carry the 'HIGH' region motif; it reads PTGSNIHLGH. The 'KMSKS' region signature appears at 248–252; the sequence is KMSKS. K251 lines the ATP pocket. The 65-residue stretch at 351-415 folds into the S4 RNA-binding domain; that stretch reads AKAFYLLSAV…GKKTFRRLTA (65 aa).

The protein belongs to the class-I aminoacyl-tRNA synthetase family. TyrS type 2 subfamily. As to quaternary structure, homodimer.

It localises to the cytoplasm. The catalysed reaction is tRNA(Tyr) + L-tyrosine + ATP = L-tyrosyl-tRNA(Tyr) + AMP + diphosphate + H(+). Its function is as follows. Catalyzes the attachment of tyrosine to tRNA(Tyr) in a two-step reaction: tyrosine is first activated by ATP to form Tyr-AMP and then transferred to the acceptor end of tRNA(Tyr). The chain is Tyrosine--tRNA ligase from Parasynechococcus marenigrum (strain WH8102).